We begin with the raw amino-acid sequence, 412 residues long: Multifunctional CCA protein (412 aa).

2 residues coordinate ATP: G8 and R11. Residues G8 and R11 each coordinate CTP. Mg(2+)-binding residues include E21 and D23. ATP is bound by residues R91, R137, and R140. Positions 91, 137, and 140 each coordinate CTP. The HD domain occupies 228 to 329; it reads TGIHTLMTLA…LKLFNAIDVW (102 aa).

This sequence belongs to the tRNA nucleotidyltransferase/poly(A) polymerase family. Bacterial CCA-adding enzyme type 1 subfamily. As to quaternary structure, monomer. Can also form homodimers and oligomers. Mg(2+) is required as a cofactor. Ni(2+) serves as cofactor.

It carries out the reaction a tRNA precursor + 2 CTP + ATP = a tRNA with a 3' CCA end + 3 diphosphate. The catalysed reaction is a tRNA with a 3' CCA end + 2 CTP + ATP = a tRNA with a 3' CCACCA end + 3 diphosphate. Catalyzes the addition and repair of the essential 3'-terminal CCA sequence in tRNAs without using a nucleic acid template. Adds these three nucleotides in the order of C, C, and A to the tRNA nucleotide-73, using CTP and ATP as substrates and producing inorganic pyrophosphate. tRNA 3'-terminal CCA addition is required both for tRNA processing and repair. Also involved in tRNA surveillance by mediating tandem CCA addition to generate a CCACCA at the 3' terminus of unstable tRNAs. While stable tRNAs receive only 3'-terminal CCA, unstable tRNAs are marked with CCACCA and rapidly degraded. In Yersinia pestis, this protein is Multifunctional CCA protein.